We begin with the raw amino-acid sequence, 430 residues long: Phosphoglucosamine mutase (430 aa).

Catalysis depends on Ser-93, which acts as the Phosphoserine intermediate. Residues Ser-93, Asp-227, Asp-229, and Asp-231 each contribute to the Mg(2+) site. Position 93 is a phosphoserine (Ser-93).

This sequence belongs to the phosphohexose mutase family. It depends on Mg(2+) as a cofactor. In terms of processing, activated by phosphorylation.

It carries out the reaction alpha-D-glucosamine 1-phosphate = D-glucosamine 6-phosphate. Its function is as follows. Catalyzes the conversion of glucosamine-6-phosphate to glucosamine-1-phosphate. This chain is Phosphoglucosamine mutase, found in Thermosipho africanus (strain TCF52B).